The primary structure comprises 177 residues: Endoribonuclease YbeY (177 aa).

Positions 118, 122, and 128 each coordinate Zn(2+).

This sequence belongs to the endoribonuclease YbeY family. Zn(2+) is required as a cofactor.

Its subcellular location is the cytoplasm. Its function is as follows. Single strand-specific metallo-endoribonuclease involved in late-stage 70S ribosome quality control and in maturation of the 3' terminus of the 16S rRNA. The protein is Endoribonuclease YbeY of Mycolicibacterium paratuberculosis (strain ATCC BAA-968 / K-10) (Mycobacterium paratuberculosis).